The following is a 576-amino-acid chain: Urease subunit alpha (576 aa).

The 445-residue stretch at 132-576 folds into the Urease domain; the sequence is GGVDTHIHFI…LPMAQRYFLF (445 aa). Ni(2+) contacts are provided by His-137, His-139, and Lys-220. Lys-220 carries the N6-carboxylysine modification. His-222 lines the substrate pocket. Residues His-249 and His-275 each coordinate Ni(2+). His-323 functions as the Proton donor in the catalytic mechanism. Residue Asp-363 coordinates Ni(2+).

It belongs to the metallo-dependent hydrolases superfamily. Urease alpha subunit family. As to quaternary structure, heterotrimer of UreA (gamma), UreB (beta) and UreC (alpha) subunits. Three heterotrimers associate to form the active enzyme. Ni cation is required as a cofactor. Carboxylation allows a single lysine to coordinate two nickel ions.

It is found in the cytoplasm. The enzyme catalyses urea + 2 H2O + H(+) = hydrogencarbonate + 2 NH4(+). It functions in the pathway nitrogen metabolism; urea degradation; CO(2) and NH(3) from urea (urease route): step 1/1. The polypeptide is Urease subunit alpha (Arthrobacter sp. (strain FB24)).